A 247-amino-acid chain; its full sequence is tRNA pseudouridine synthase A (247 aa).

Aspartate 57 serves as the catalytic Nucleophile. Substrate is bound at residue tyrosine 115.

This sequence belongs to the tRNA pseudouridine synthase TruA family. As to quaternary structure, homodimer.

It catalyses the reaction uridine(38/39/40) in tRNA = pseudouridine(38/39/40) in tRNA. Functionally, formation of pseudouridine at positions 38, 39 and 40 in the anticodon stem and loop of transfer RNAs. The chain is tRNA pseudouridine synthase A from Chlorobaculum tepidum (strain ATCC 49652 / DSM 12025 / NBRC 103806 / TLS) (Chlorobium tepidum).